A 78-amino-acid polypeptide reads, in one-letter code: MASTKYLVLLFICLSVLLTPGLGTDPVPTPPGLHIPCGKGFTSKECNKYCTGVGYRRGYCAPDEEYPQISSCYCKWRI.

An N-terminal signal peptide occupies residues 1–23 (MASTKYLVLLFICLSVLLTPGLG). 3 cysteine pairs are disulfide-bonded: C37–C60, C46–C72, and C50–C74.

This sequence belongs to the DEFL family.

Its subcellular location is the secreted. The sequence is that of Defensin-like protein 281 from Arabidopsis thaliana (Mouse-ear cress).